The sequence spans 261 residues: Endonuclease NucS (261 aa).

It belongs to the NucS endonuclease family.

The protein resides in the cytoplasm. Cleaves both 3' and 5' ssDNA extremities of branched DNA structures. The sequence is that of Endonuclease NucS from Aeropyrum pernix (strain ATCC 700893 / DSM 11879 / JCM 9820 / NBRC 100138 / K1).